A 432-amino-acid polypeptide reads, in one-letter code: Transcriptional adapter 3 (432 aa).

Residue Lys21 forms a Glycyl lysine isopeptide (Lys-Gly) (interchain with G-Cter in SUMO2) linkage. Residues Ile40–Gln69 adopt a coiled-coil conformation. Positions Ala87–Gln127 are disordered. Lys129 is covalently cross-linked (Glycyl lysine isopeptide (Lys-Gly) (interchain with G-Cter in SUMO2)). The tract at residues Asn272 to Lys319 is disordered. Phosphoserine occurs at positions 280 and 298. A compositionally biased stretch (polar residues) spans Ala295–Pro305. A coiled-coil region spans residues Leu367–Thr407. Lys418 is modified (N6-acetyllysine).

The protein belongs to the NGG1 family. The PCAF complex is composed of a number of TBP-associated factors (TAFS), such as TAF5, TAF5L, TAF6, TAF6L, TAF9, TAF10 and TAF12, PCAF, and also PCAF-associated factors (PAFs), such as TADA2L/ADA2, TADA3L/ADA3 and SPT3. Interacts directly with TADA2L and PCAF and also with the high-risk HPV oncoprotein E6. Component of the STAGA transcription coactivator-HAT complex, at least composed of SUPT3H, GCN5L2, TAF5L, TAF6L, SUPT7L, TADA3L, TAD1L, TAF10, TAF12, TRRAP and TAF9. Component of the TFTC-HAT complex. Component of the ADA2A-containing complex (ATAC), composed of KAT14, KAT2A, TADA2L, TADA3L, ZZ3, MBIP, WDR5, YEATS2, CCDC101 and DR1.

It localises to the nucleus. Functions as a component of the PCAF complex. The PCAF complex is capable of efficiently acetylating histones in a nucleosomal context. The PCAF complex could be considered as the human version of the yeast SAGA complex. Also known as a coactivator for p53/TP53-dependent transcriptional activation. Component of the ATAC complex, a complex with histone acetyltransferase activity on histones H3 and H4. In Rattus norvegicus (Rat), this protein is Transcriptional adapter 3 (Tada3).